We begin with the raw amino-acid sequence, 224 residues long: Phosphoribosylformylglycinamidine synthase subunit PurQ (224 aa).

Residues 2–224 (KFAVIVFPGS…IVDNFVKGGV (223 aa)) form the Glutamine amidotransferase type-1 domain. The active-site Nucleophile is cysteine 86. Active-site residues include histidine 194 and glutamate 196.

In terms of assembly, part of the FGAM synthase complex composed of 1 PurL, 1 PurQ and 2 PurS subunits.

The protein resides in the cytoplasm. It carries out the reaction N(2)-formyl-N(1)-(5-phospho-beta-D-ribosyl)glycinamide + L-glutamine + ATP + H2O = 2-formamido-N(1)-(5-O-phospho-beta-D-ribosyl)acetamidine + L-glutamate + ADP + phosphate + H(+). It catalyses the reaction L-glutamine + H2O = L-glutamate + NH4(+). It participates in purine metabolism; IMP biosynthesis via de novo pathway; 5-amino-1-(5-phospho-D-ribosyl)imidazole from N(2)-formyl-N(1)-(5-phospho-D-ribosyl)glycinamide: step 1/2. In terms of biological role, part of the phosphoribosylformylglycinamidine synthase complex involved in the purines biosynthetic pathway. Catalyzes the ATP-dependent conversion of formylglycinamide ribonucleotide (FGAR) and glutamine to yield formylglycinamidine ribonucleotide (FGAM) and glutamate. The FGAM synthase complex is composed of three subunits. PurQ produces an ammonia molecule by converting glutamine to glutamate. PurL transfers the ammonia molecule to FGAR to form FGAM in an ATP-dependent manner. PurS interacts with PurQ and PurL and is thought to assist in the transfer of the ammonia molecule from PurQ to PurL. This chain is Phosphoribosylformylglycinamidine synthase subunit PurQ, found in Caldanaerobacter subterraneus subsp. tengcongensis (strain DSM 15242 / JCM 11007 / NBRC 100824 / MB4) (Thermoanaerobacter tengcongensis).